We begin with the raw amino-acid sequence, 62 residues long: Bowman-Birk type proteinase inhibitor B7 (62 aa).

5 disulfides stabilise this stretch: C5–C59, C6–C23, C13–C21, C30–C37, and C34–C51.

Belongs to the Bowman-Birk serine protease inhibitor family. Expressed in bulb (at protein level).

Its function is as follows. Serine protease inhibitor. Inhibits trypsin (Ki = 65 nM) and weakly inhibits chymotrypsin (Ki = 295 nM). Does not inhibit bacterial subtilisin. In Hyacinthus orientalis (Common hyacinth), this protein is Bowman-Birk type proteinase inhibitor B7.